A 550-amino-acid polypeptide reads, in one-letter code: Metal transporter Nramp4 (550 aa).

Basic and acidic residues predominate over residues 1–13 (MEEGAKIGREHEQ). Residues 1 to 37 (MEEGAKIGREHEQQQQQHGRVNGSGRVAAVGGGSGGG) form a disordered region. The span at 14-29 (QQQQHGRVNGSGRVAA) shows a compositional bias: low complexity. 12 helical membrane passes run 72-92 (FLAHVGPGFVISIAYLDPSNL), 105-125 (SLLWVLLFGFIFVLTVQSLAA), 151-171 (LWLLAELGVIAATIPGVLGTA), 177-197 (LLHIPFWAGVLACGACTFLIL), 207-227 (MEFTISVLMLVMATCFFMELG), 255-275 (VAMFGSLVVPHNLFLHSSLVL), 292-312 (FFLLENALALFIALLVNVAIV), 354-374 (VYGVALLVSGQSCMVATSYAG), 388-408 (IIYLVAPCFTLLPSLIICSIG), 416-436 (IINIAAIVLSFVLPFALIPLI), 457-477 (IAWILSLVIIGINIYFFCTSF), and 492-512 (AIISSLVFPFMAAYIAALIYL).

It belongs to the NRAMP (TC 2.A.55) family.

It is found in the membrane. Probable metal transporter. This is Metal transporter Nramp4 (NRAMP4) from Oryza sativa subsp. japonica (Rice).